The chain runs to 209 residues: Large ribosomal subunit protein bL25 (209 aa).

The disordered stretch occupies residues 185 to 209 (SKATTGEEEGAEAAGEGEEAEEKPE). Residues 190–209 (GEEEGAEAAGEGEEAEEKPE) show a composition bias toward acidic residues.

The protein belongs to the bacterial ribosomal protein bL25 family. CTC subfamily. Part of the 50S ribosomal subunit; part of the 5S rRNA/L5/L18/L25 subcomplex. Contacts the 5S rRNA. Binds to the 5S rRNA independently of L5 and L18.

Its function is as follows. This is one of the proteins that binds to the 5S RNA in the ribosome where it forms part of the central protuberance. The sequence is that of Large ribosomal subunit protein bL25 from Syntrophomonas wolfei subsp. wolfei (strain DSM 2245B / Goettingen).